We begin with the raw amino-acid sequence, 578 residues long: Transcriptional regulator SKO1 (578 aa).

The segment covering Asn-39–Thr-50 has biased composition (polar residues). Disordered regions lie at residues Asn-39 to Pro-169, Met-176 to Leu-195, Leu-287 to Pro-311, and Glu-342 to Phe-489. Residues Ser-51 to Asn-62 show a composition bias toward low complexity. Composition is skewed to polar residues over residues Asn-70–Val-80 and Gly-107–Ser-132. Residues Pro-154–Pro-169 are compositionally biased toward low complexity. Residues Leu-184 to Ser-193 are compositionally biased toward polar residues. 2 stretches are compositionally biased toward low complexity: residues Leu-287–Leu-296 and Asp-356–Ala-370. Residues Lys-384–Gly-402 show a composition bias toward basic residues. Positions Lys-415–Leu-443 are enriched in basic and acidic residues. Over residues Asn-445–Lys-471 the composition is skewed to low complexity. A bZIP domain is found at Asp-483–Gln-546. Residues Lys-485–Lys-505 form a basic motif region. A leucine-zipper region spans residues Ile-508 to Leu-515.

Belongs to the bZIP family. Post-translationally, undergoes HOG1-dependent phosphorylation after osmotic stress.

Its subcellular location is the nucleus. Functionally, transcription repressor involved in cell wall damage response. Regulates 79 caspofungin-responsive genes, including several cell wall biogenesis genes such as CRH11, MNN2, and SKN1. Also controls the expression of pathogenesis and hyphal related genes and represses the yeast-to-hypha transition. Mediates the response to oxidative stress. This chain is Transcriptional regulator SKO1 (SKO1), found in Candida albicans (strain SC5314 / ATCC MYA-2876) (Yeast).